The primary structure comprises 636 residues: Transcription termination factor FttA (636 aa).

The segment at 3–70 (SEMLEEIKRT…IIIRSDRSVL (68 aa)) is KHa. The tract at residues 71-138 (MDPEKAIRKI…WAPKILRTPP (68 aa)) is KHb. A metallo-beta-lactamase N-terminus region spans residues 179 to 383 (WARLTAMGGF…LVMESTYGGH (205 aa)). Zn(2+) is bound by residues His-242, His-244, Asp-246, His-247, His-329, and Asp-352. The beta-Casp stretch occupies residues 384–577 (EDVQPSRNRA…MNIKTIEGFS (194 aa)). The tract at residues 578 to 636 (GHSDRRQLMEYVKRISPKPEKILLCHGDNYKTLDLASSIYRTYRIETKTPLNLETVRIQ) is metallo-beta-lactamase C-terminus. His-603 provides a ligand contact to Zn(2+).

The protein belongs to the metallo-beta-lactamase superfamily. RNA-metabolizing metallo-beta-lactamase-like family. FttA subfamily. Homodimer. Interacts with RNA polymerase (RNAP), interacts with the Spt4-Spt5 complex. Does not seem to interact with the RNA degrading exosome. Requires Zn(2+) as cofactor.

Its activity is regulated as follows. Most active at 0.5 M or 0.7 M NaCl, less active at 1.0 M NaCl. Nuclease activity is inhibited by N,N,Tetrakis-(2-pyridylmethyl)-ethylene diamine (TPEN), a specific chelator of zinc ions. In terms of biological role, terminates transcription on the whole genome. Termination is linked to FttA-mediated RNA cleavage and does not require NTP hydrolysis. Cleaves endonucleolytically at the RNA exit channel of RNA polymerase (RNAP); the 5'-3' exonuclease activity of this protein degrades the nascent RNA released from RNAP. Its function is as follows. An RNA nuclease, it bind single-stranded RNA (ssRNA) with a preference for U-rich sequences. In Methanothermobacter thermautotrophicus (strain ATCC 29096 / DSM 1053 / JCM 10044 / NBRC 100330 / Delta H) (Methanobacterium thermoautotrophicum), this protein is Transcription termination factor FttA.